We begin with the raw amino-acid sequence, 198 residues long: Holliday junction branch migration complex subunit RuvA (198 aa).

Residues 1 to 63 (MYDYIKGQLT…EDAHLLFGFH (63 aa)) are domain I. Residues 64–142 (TEDEKDVFLK…EAPQETGHTK (79 aa)) are domain II. Residues 143–147 (ARSNK) are flexible linker. Residues 148-198 (AGNTQLDEAIEALLALGYKATELKKIRAFFEGTSETAEQYIKSALKLLMKG) are domain III.

Belongs to the RuvA family. In terms of assembly, homotetramer. Forms an RuvA(8)-RuvB(12)-Holliday junction (HJ) complex. HJ DNA is sandwiched between 2 RuvA tetramers; dsDNA enters through RuvA and exits via RuvB. An RuvB hexamer assembles on each DNA strand where it exits the tetramer. Each RuvB hexamer is contacted by two RuvA subunits (via domain III) on 2 adjacent RuvB subunits; this complex drives branch migration. In the full resolvosome a probable DNA-RuvA(4)-RuvB(12)-RuvC(2) complex forms which resolves the HJ.

The protein resides in the cytoplasm. Its function is as follows. The RuvA-RuvB-RuvC complex processes Holliday junction (HJ) DNA during genetic recombination and DNA repair, while the RuvA-RuvB complex plays an important role in the rescue of blocked DNA replication forks via replication fork reversal (RFR). RuvA specifically binds to HJ cruciform DNA, conferring on it an open structure. The RuvB hexamer acts as an ATP-dependent pump, pulling dsDNA into and through the RuvAB complex. HJ branch migration allows RuvC to scan DNA until it finds its consensus sequence, where it cleaves and resolves the cruciform DNA. This is Holliday junction branch migration complex subunit RuvA from Streptococcus pyogenes serotype M6 (strain ATCC BAA-946 / MGAS10394).